A 130-amino-acid chain; its full sequence is Large ribosomal subunit protein bL19 (130 aa).

Belongs to the bacterial ribosomal protein bL19 family.

This protein is located at the 30S-50S ribosomal subunit interface and may play a role in the structure and function of the aminoacyl-tRNA binding site. This Mycoplasma capricolum subsp. capricolum (strain California kid / ATCC 27343 / NCTC 10154) protein is Large ribosomal subunit protein bL19.